The sequence spans 64 residues: Long neurotoxin MS4 (64 aa).

Intrachain disulfides connect C3/C24, C6/C11, C17/C41, C45/C57, and C58/C63.

The protein belongs to the three-finger toxin family. Ancestral subfamily. In terms of tissue distribution, expressed by the venom gland.

The protein localises to the secreted. Its function is as follows. Produces peripheral paralysis by blocking neuromuscular transmission at the postsynaptic site. Weak inhibitor of the endogenous nicotinic acetylcholine receptors (nAChR) in the human rhabdomyosarcoma TE 671 cell line with an IC(50) of 690 mM. This neurotoxin is lethal to zebrafish by injection at the back of the dorsolateral region, but is not toxic to mice by intraperitoneal injection. This Micrurus surinamensis (Surinam coral snake) protein is Long neurotoxin MS4.